We begin with the raw amino-acid sequence, 61 residues long: MGMRMMFTVFLLVVLATTVVSFTSDRASDGGNAAASDLIALTIKGCCSRPPCALSNPDYCG.

Positions Met-1–Ser-21 are cleaved as a signal peptide. Positions Phe-22 to Lys-44 are excised as a propeptide. Intrachain disulfides connect Cys-46–Cys-52 and Cys-47–Cys-60. A ser-Xaa-Pro motif, crucial for potent interaction with nAChR region spans residues Ser-48–Pro-50. Cys-60 carries the post-translational modification Cysteine amide.

This sequence belongs to the conotoxin A superfamily. As to expression, expressed by the venom duct.

Its subcellular location is the secreted. Alpha-conotoxins act on postsynaptic membranes, they bind to the nicotinic acetylcholine receptors (nAChR) and thus inhibit them. This toxin blocks mammalian nAChRs (alpha-7 &gt; alpha-3/beta-2). The protein is Alpha-conotoxin-like PnMGMR-02 of Conus pennaceus (Feathered cone).